The chain runs to 210 residues: NADH dehydrogenase [ubiquinone] iron-sulfur protein 8, mitochondrial (210 aa).

A mitochondrion-targeting transit peptide spans 1 to 34; it reads MRCLTTPMLLRALAQAARAGPPGGRSLHSSAVAA. 4Fe-4S ferredoxin-type domains lie at 102–131 and 141–170; these read RRYP…IEAE and TRYD…EGPN. C111, C114, C117, C121, C150, C153, C156, and C160 together coordinate [4Fe-4S] cluster.

It belongs to the complex I 23 kDa subunit family. Core subunit of respiratory chain NADH dehydrogenase (Complex I) which is composed of 45 different subunits. This is a component of the iron-sulfur (IP) fragment of the enzyme. Interacts with RAB5IF. [4Fe-4S] cluster is required as a cofactor. Expressed in all tissues with the highest level in heart and skeletal muscle and the lowest level in lung.

It localises to the mitochondrion inner membrane. The catalysed reaction is a ubiquinone + NADH + 5 H(+)(in) = a ubiquinol + NAD(+) + 4 H(+)(out). Functionally, core subunit of the mitochondrial membrane respiratory chain NADH dehydrogenase (Complex I) which catalyzes electron transfer from NADH through the respiratory chain, using ubiquinone as an electron acceptor. Essential for the catalytic activity and assembly of complex I. The polypeptide is NADH dehydrogenase [ubiquinone] iron-sulfur protein 8, mitochondrial (NDUFS8) (Homo sapiens (Human)).